The primary structure comprises 601 residues: Kelch-like ECH-associated protein 1A (601 aa).

The BTB domain occupies 44–117 (MDELRHHEML…VISRLIDFAY (74 aa)). A BACK domain is found at 153-253 (KNLEPSNVIG…LNAVHIYALP (101 aa)). Kelch repeat units lie at residues 292–337 (PTPH…PCSG), 338–388 (LGAC…PRNR), 389–435 (VGVG…ARLG), 436–482 (AGVA…VRSG), 484–529 (GVVC…CRSA), and 530–576 (HGVS…GRSG).

Belongs to the KEAP1 family. In terms of assembly, homodimer and heterodimer; heterodimerizes with keap1b. Component of the BCR(KEAP1) E3 ubiquitin ligase complex, at least composed of 2 molecules of cul3, 2 molecules of keap1 (keap1a and/or keap1b), and rbx1. Interacts with nfe2l2/nrf2; the interaction is direct. Non-enzymatic covalent modifications of reactive cysteines by electrophile metabolites inactivate the BCR(KEAP1) complex. As to expression, widely expressed.

The protein localises to the cytoplasm. It is found in the nucleus. It functions in the pathway protein modification; protein ubiquitination. Ubiquitin ligase activity of the BCR(KEAP1) complex is inhibited by oxidative stress and electrophile metabolites such as sulforaphane. Electrophile metabolites react with reactive cysteine residues in keap1 and trigger non-enzymatic covalent modifications of these cysteine residues, leading to inactivate the ubiquitin ligase activity of the BCR(KEAP1) complex. Its function is as follows. Substrate-specific adapter of a BCR (BTB-CUL3-RBX1) E3 ubiquitin ligase complex that regulates the response to oxidative stress by targeting nfe2l2/nrf2 for ubiquitination. Keap1 acts as a key sensor of oxidative and electrophilic stress: in normal conditions, the BCR(KEAP1) complex mediates ubiquitination and degradation of nfe2l2/nrf2, a transcription factor regulating expression of many cytoprotective genes. In response to oxidative stress, different electrophile metabolites trigger non-enzymatic covalent modifications of highly reactive cysteine residues in KEAP1, leading to inactivate the ubiquitin ligase activity of the BCR(KEAP1) complex, promoting nfe2l2/nrf2 nuclear accumulation and expression of phase II detoxifying enzymes. This Danio rerio (Zebrafish) protein is Kelch-like ECH-associated protein 1A.